The sequence spans 352 residues: Replication-associated protein (352 aa).

In terms of domain architecture, CRESS-DNA virus Rep endonuclease spans 9 to 117; it reads QINAKNYFLT…DGDTLVWGEF (109 aa). Residues 16 to 19 carry the RCR-1 motif; the sequence is FLTY. 3 residues coordinate a divalent metal cation: E50, H58, and H60. Positions 58-60 match the RCR-2 motif; sequence HLH. Residue Y104 is the For DNA cleavage activity of the active site. Positions 104-107 match the RCR-3 motif; the sequence is YIDK. A divalent metal cation is bound at residue D108. Residues 144–154 form a binding to RBR1 region; sequence KEEALQIIREK. Residues 157 to 177 form an oligomerization region; that stretch reads EKYLFQFHNLNSNLDRIFDKT. 223-230 serves as a coordination point for ATP; it reads GDSRTGKT.

This sequence belongs to the geminiviridae Rep protein family. In terms of assembly, homooligomer. Interacts with the replication enhancer protein (REn). Interacts with host retinoblastoma-related protein 1 (RBR1), and may thereby induce the transcription of host replicative enzymes even if the cell is not dividing anymore. Interacts with host PCNA. Interacts with host SCE1 protein. Interacts with host GRIK1, GRIK2, GRIMP and histone H3. Mg(2+) serves as cofactor. It depends on Mn(2+) as a cofactor.

It localises to the host nucleus. Its function is as follows. Essential for the replication of viral ssDNA. The closed circular ssDNA genome is first converted to a superhelical dsDNA. Rep binds a specific region at the genome origin of replication. It introduces an endonucleolytic nick within the conserved sequence 5'-TAATATTAC-3' in the intergenic region of the genome present in all geminiviruses, thereby initiating the rolling circle replication (RCR). Following cleavage, binds covalently to the 5'-phosphate of DNA as a tyrosyl ester. The cleavage gives rise to a free 3'-OH that serves as a primer for the cellular DNA polymerase. The polymerase synthesizes the (+) strand DNA by rolling circle mechanism. After one round of replication, a Rep-catalyzed nucleotidyl transfer reaction releases a circular single-stranded virus genome, thereby terminating the replication. Displays origin-specific DNA cleavage, nucleotidyl transferase, ATPase and helicase activities. In Solanum lycopersicum (Tomato), this protein is Replication-associated protein.